The following is a 92-amino-acid chain: Small ribosomal subunit protein uS19c (92 aa).

Belongs to the universal ribosomal protein uS19 family.

It is found in the plastid. The protein localises to the chloroplast. In terms of biological role, protein S19 forms a complex with S13 that binds strongly to the 16S ribosomal RNA. In Populus alba (White poplar), this protein is Small ribosomal subunit protein uS19c.